We begin with the raw amino-acid sequence, 279 residues long: uncharacterized protein (279 aa).

Residues Met1–Gly28 form a disordered region. Over residues Ser9–Asn23 the composition is skewed to low complexity. A helical membrane pass occupies residues Lys256–Ala273.

The protein localises to the host membrane. This is an uncharacterized protein from Pseudoalteromonas espejiana (Bacteriophage PM2).